The sequence spans 777 residues: MNNNNNNNNNNNNNNNNNNNNNSNNNDNNYKNNSNNSNNKNNNNNNNNDDNNSSNNNNNNNNNNNNNNNNSNNNNNNNNNNSNNNNNNNDKNDSTNNNLSNISNLNNKFNFNNNDDIIDSECDNNYESYNNNNNNNNNNKNNNNNINDDNRPLVPKILNIHNCIVHSNSNSSNSLIEQSSFPGTPKKRRFIDYLDDENEEDIDYNEENYHSIKNHNHHHHIHNYNHNYNQHSINDDNNRHIHNNNNNNNNNNNNNNNNNINNHNNMNDRIDHNDCTLVNNLTPRDDQNYLKNNSNLEFVNKNNQANNIFNNNNNNNNNNNNNFYNNPFLNQIPSLPFSSLSDNNGDDDDDGIDDGIDDGIDDGIDDIDQEFTYNNYEQYDKEIDSDFDSEISNSFHQNQSPCNNSFKNNNNNNNNNNNNNNNNNNNNNNNNNNNNNNNNSNNGSTSTSSSPCIFSSSFSPSRATISPNRFKKSYKSLNRPLKKFYEETSLSQSSTTTISTSTTISEVFNEKSYSFSSFGSNSFSSLNIKNLNNNNNNNNNNNNNNNNNNNNNNNNNNNNNSNNNNNNNNSNNKNNKGKVCFLNKEIEISLAQEPNDEQNKTKKELEEVKEEEEEEEEEISTIESEKNKDIMMDFYHNTLSKFSEFKIYDQDEPELLEFENNNENNNNNDQDYHYHSFINGRVNRQSNNDLDRFNTQTFNRYNRSINPMALLLEKQGGDDPEDSSDSDSDSDSNSNSDSSDLGNITVRKWKPVEITNSTTTDESNVIKVFKNNKNINQ.

Disordered regions lie at residues M1–N101, S128–N150, H219–N267, S334–D366, I391–S466, K529–G577, L590–I622, and E713–P751. Composition is skewed to low complexity over residues S128 to N147 and N243 to N265. A compositionally biased stretch (polar residues) spans S334–N343. Over residues N344–D366 the composition is skewed to acidic residues. The span at I391–K407 shows a compositional bias: polar residues. Low complexity-rich tracts occupy residues N408–S466 and N532–N574. A compositionally biased stretch (basic and acidic residues) spans E597–E606. Composition is skewed to acidic residues over residues E607–S620 and D718–S730. A compositionally biased stretch (low complexity) spans D731–D740.

This is an uncharacterized protein from Dictyostelium discoideum (Social amoeba).